The sequence spans 32 residues: Coenzyme PQQ synthesis protein A (32 aa).

Residues 16–20 constitute a cross-link (pyrroloquinoline quinone (Glu-Tyr)); the sequence is EINMY.

It belongs to the PqqA family.

It participates in cofactor biosynthesis; pyrroloquinoline quinone biosynthesis. Required for coenzyme pyrroloquinoline quinone (PQQ) biosynthesis. PQQ is probably formed by cross-linking a specific glutamate to a specific tyrosine residue and excising these residues from the peptide. The protein is Coenzyme PQQ synthesis protein A of Dinoroseobacter shibae (strain DSM 16493 / NCIMB 14021 / DFL 12).